The primary structure comprises 825 residues: IQ and AAA domain-containing protein 1-like (825 aa).

Residues 206–235 (RDQGAIVIQKVWKGYLQRKRIEQDRRVEME) form the IQ domain. Basic and acidic residues predominate over residues 344–366 (QAQESRKKDQEKKEKNKEKEKEK). Disordered stretches follow at residues 344–378 (QAQE…KEEK) and 459–487 (DREE…KDLT). Positions 467 to 482 (KSPKKKGGKKSGKKKK) are enriched in basic residues. 572–579 (GPSGMGKK) contributes to the ATP binding site.

This sequence belongs to the AAA ATPase family.

This Mus musculus (Mouse) protein is IQ and AAA domain-containing protein 1-like (Iqca1l).